A 184-amino-acid polypeptide reads, in one-letter code: ATP synthase subunit b, chloroplastic (184 aa).

A helical transmembrane segment spans residues 27–49 (LATNPINLSVVLGVLIFFGKGVL).

It belongs to the ATPase B chain family. As to quaternary structure, F-type ATPases have 2 components, F(1) - the catalytic core - and F(0) - the membrane proton channel. F(1) has five subunits: alpha(3), beta(3), gamma(1), delta(1), epsilon(1). F(0) has four main subunits: a(1), b(1), b'(1) and c(10-14). The alpha and beta chains form an alternating ring which encloses part of the gamma chain. F(1) is attached to F(0) by a central stalk formed by the gamma and epsilon chains, while a peripheral stalk is formed by the delta, b and b' chains.

The protein localises to the plastid. The protein resides in the chloroplast thylakoid membrane. In terms of biological role, f(1)F(0) ATP synthase produces ATP from ADP in the presence of a proton or sodium gradient. F-type ATPases consist of two structural domains, F(1) containing the extramembraneous catalytic core and F(0) containing the membrane proton channel, linked together by a central stalk and a peripheral stalk. During catalysis, ATP synthesis in the catalytic domain of F(1) is coupled via a rotary mechanism of the central stalk subunits to proton translocation. Its function is as follows. Component of the F(0) channel, it forms part of the peripheral stalk, linking F(1) to F(0). This chain is ATP synthase subunit b, chloroplastic, found in Buxus microphylla (Littleleaf boxwood).